Reading from the N-terminus, the 578-residue chain is Putative transporter B0361.11 (578 aa).

The disordered stretch occupies residues 1-30; sequence MSISRRSYEQFDEMKSENQENNSKKKSSER. 11 helical membrane-spanning segments follow: residues 51–71, 148–168, 182–202, 232–252, 263–283, 339–359, 373–393, 399–419, 426–446, 457–477, and 486–506; these read IFTYVLVQTLNFFYSSSMYIM, FGLTIFTIGAVIAVPFMSMLA, ILAFLANMAASFSPNFAIFLI, AWITVVYNVAWSLGMVWTLLV, YFIVSLPGVYGFALWYFLPES, IWLLFANGFIEMVISLVYFAI, AFLYSSLIEIPAGLAVIPLMM, MIVIWCLVFQTLALIGVTVFL, LVIMLVAKVMATIIYSVHPIW, SLCFSLMNIPQSMGIIMSPYV, and WIPFVVIALFSFISATLAFML. A compositionally biased stretch (low complexity) spans 532–550; it reads AYRRSKSSSSSVSALSKTS. The tract at residues 532-561 is disordered; it reads AYRRSKSSSSSVSALSKTSVRSKKTLSSES.

It belongs to the major facilitator superfamily. Sugar transporter (TC 2.A.1.1) family.

The protein resides in the membrane. This Caenorhabditis elegans protein is Putative transporter B0361.11.